The chain runs to 373 residues: Centrosomal protein of 41 kDa (373 aa).

The segment at 89–137 (QRLEDNDSAASDPDAETTARTNGKGNPGEQSPSPEQFINNAGAGDSSRS) is disordered. Phosphoserine is present on residues S96 and S99. Over residues 106 to 127 (TARTNGKGNPGEQSPSPEQFIN) the composition is skewed to polar residues. At T109 the chain carries Phosphothreonine. At S121 the chain carries Phosphoserine. Residues 169-266 (PDCPFLLLDV…LAQKFPEGLI (98 aa)) enclose the Rhodanese domain. The interval 275–373 (QQALPPGSAR…SGHLQGKPWK (99 aa)) is disordered. Over residues 298–312 (NKWRFTPEDLKKIEY) the composition is skewed to basic and acidic residues. R343 is modified (omega-N-methylarginine). Positions 355–366 (SHSNPRSLSSGH) are enriched in polar residues.

The protein belongs to the CEP41 family. In terms of assembly, found in a complex with TTLL6. As to expression, expressed in testis and fetal tissues.

Its subcellular location is the cytoplasm. The protein localises to the cytoskeleton. It localises to the microtubule organizing center. It is found in the centrosome. The protein resides in the cell projection. Its subcellular location is the cilium. The protein localises to the cilium basal body. Functionally, required during ciliogenesis for tubulin glutamylation in cilium. Probably acts by participating in the transport of TTLL6, a tubulin polyglutamylase, between the basal body and the cilium. The polypeptide is Centrosomal protein of 41 kDa (CEP41) (Homo sapiens (Human)).